Here is a 214-residue protein sequence, read N- to C-terminus: Holliday junction branch migration complex subunit RuvA (214 aa).

Positions 1 to 63 are domain I; it reads MIASLSGTVE…EDALTLYGFA (63 aa). Residues 64 to 142 form a domain II region; sequence DRDEREVFEV…PTGEPVPGAE (79 aa). Positions 143–151 are flexible linker; sequence AEASDEPAV. The interval 151-214 is domain III; that stretch reads VETVWHADVV…GMAGAVRGGR (64 aa).

Belongs to the RuvA family. In terms of assembly, homotetramer. Forms an RuvA(8)-RuvB(12)-Holliday junction (HJ) complex. HJ DNA is sandwiched between 2 RuvA tetramers; dsDNA enters through RuvA and exits via RuvB. An RuvB hexamer assembles on each DNA strand where it exits the tetramer. Each RuvB hexamer is contacted by two RuvA subunits (via domain III) on 2 adjacent RuvB subunits; this complex drives branch migration. In the full resolvosome a probable DNA-RuvA(4)-RuvB(12)-RuvC(2) complex forms which resolves the HJ.

The protein localises to the cytoplasm. Functionally, the RuvA-RuvB-RuvC complex processes Holliday junction (HJ) DNA during genetic recombination and DNA repair, while the RuvA-RuvB complex plays an important role in the rescue of blocked DNA replication forks via replication fork reversal (RFR). RuvA specifically binds to HJ cruciform DNA, conferring on it an open structure. The RuvB hexamer acts as an ATP-dependent pump, pulling dsDNA into and through the RuvAB complex. HJ branch migration allows RuvC to scan DNA until it finds its consensus sequence, where it cleaves and resolves the cruciform DNA. In Micrococcus luteus (strain ATCC 4698 / DSM 20030 / JCM 1464 / CCM 169 / CCUG 5858 / IAM 1056 / NBRC 3333 / NCIMB 9278 / NCTC 2665 / VKM Ac-2230) (Micrococcus lysodeikticus), this protein is Holliday junction branch migration complex subunit RuvA.